Consider the following 436-residue polypeptide: Ribosomal protein uS12 methylthiotransferase RimO (436 aa).

An MTTase N-terminal domain is found at 2 to 117; sequence RNVGIISLGC…IVDVIEEVKK (116 aa). [4Fe-4S] cluster is bound by residues C11, C47, C80, C154, C158, and C161. The region spanning 140 to 369 is the Radical SAM core domain; it reads TTPPYYAYLK…MEIQKQISYE (230 aa). Residues 372–436 enclose the TRAM domain; that stretch reads MSKIGTKLEV…AFEYDLVGEY (65 aa).

It belongs to the methylthiotransferase family. RimO subfamily. [4Fe-4S] cluster serves as cofactor.

The protein localises to the cytoplasm. It carries out the reaction L-aspartate(89)-[ribosomal protein uS12]-hydrogen + (sulfur carrier)-SH + AH2 + 2 S-adenosyl-L-methionine = 3-methylsulfanyl-L-aspartate(89)-[ribosomal protein uS12]-hydrogen + (sulfur carrier)-H + 5'-deoxyadenosine + L-methionine + A + S-adenosyl-L-homocysteine + 2 H(+). Its function is as follows. Catalyzes the methylthiolation of an aspartic acid residue of ribosomal protein uS12. The sequence is that of Ribosomal protein uS12 methylthiotransferase RimO from Caldanaerobacter subterraneus subsp. tengcongensis (strain DSM 15242 / JCM 11007 / NBRC 100824 / MB4) (Thermoanaerobacter tengcongensis).